Reading from the N-terminus, the 501-residue chain is Lysine--tRNA ligase (501 aa).

Mg(2+) is bound by residues Glu411 and Glu418.

It belongs to the class-II aminoacyl-tRNA synthetase family. Homodimer. Requires Mg(2+) as cofactor.

It localises to the cytoplasm. It catalyses the reaction tRNA(Lys) + L-lysine + ATP = L-lysyl-tRNA(Lys) + AMP + diphosphate. This chain is Lysine--tRNA ligase, found in Pseudomonas aeruginosa (strain LESB58).